The chain runs to 724 residues: Eukaryotic elongation factor 2 kinase (724 aa).

The residue at position 2 (Ala2) is an N-acetylalanine. The disordered stretch occupies residues 11-35; that stretch reads EGVDGGGSSGAGRHGDSDTDSDDDE. Residues 13–22 are compositionally biased toward gly residues; sequence VDGGGSSGAG. A phosphoserine mark is found at Ser18, Ser27, Ser70, and Ser73. Ser77 bears the Phosphoserine; by autocatalysis and TRPM7 mark. Residues 80 to 93 form a calmodulin-binding region; sequence FKEAWKHAIEKAKH. The region spanning 115-325 is the Alpha-type protein kinase domain; sequence RYNAVTGEWL…ICQSMGLAPF (211 aa). Ser242 is subject to Phosphoserine. 295–301 contacts ATP; the sequence is GDGNLGV. At Thr347 the chain carries Phosphothreonine. Phosphothreonine; by autocatalysis is present on Thr352. The interval 353–476 is disordered; the sequence is EEKCGSPRIR…PESDEDSLGS (124 aa). A Phosphoserine; by MAPK13 and CDK1 modification is found at Ser358. The span at 364–376 shows a compositional bias: low complexity; the sequence is LSGSRPPLLLRLS. 2 positions are modified to phosphoserine: Ser365 and Ser391. Over residues 385–403 the composition is skewed to polar residues; that stretch reads SDVTFDSLPSSPSSATPHS. The residue at position 397 (Ser397) is a Phosphoserine; by AMPK. Composition is skewed to basic and acidic residues over residues 421–435 and 444–468; these read GPRD…RDSE and SEKR…RRPE. A phosphoserine mark is found at Ser434, Ser444, Ser469, Ser473, and Ser476. The residue at position 499 (Ser499) is a Phosphoserine; by PKA.

The protein belongs to the protein kinase superfamily. Alpha-type protein kinase family. In terms of assembly, monomer or homodimer. Interacts with Calmodulin/CALM1; this interaction is strictly required for phosphorylation activity. In terms of processing, the N-terminus is blocked. Autophosphorylated at multiple residues, Thr-347 being the major site. Phosphorylated by AMP-activated protein kinase AMPK at Ser-397 leading to EEF2K activation and protein synthesis inhibition. Phosphorylated by TRPM7 at Ser-77 resulting in improved protein stability, higher EE2F phosphorylated and subsequently reduced rate of protein synthesis. Phosphorylation by other kinases such as CDK1 and MAPK13 at Ser-358 or RPS6KA1 and RPS6KB1 at Ser-365 instead decrease EEF2K activity and promote protein synthesis. As to expression, widely expressed, with high levels in reticulocytes and skeletal muscle.

It catalyses the reaction [translation elongation factor 2] + ATP = [translation elongation factor 2]-phosphate + ADP + H(+). With respect to regulation, undergoes calcium/calmodulin-dependent intramolecular autophosphorylation, and this results in it becoming partially calcium/calmodulin-independent. Its function is as follows. Threonine kinase that regulates protein synthesis by controlling the rate of peptide chain elongation. Upon activation by a variety of upstream kinases including AMPK or TRPM7, phosphorylates the elongation factor EEF2 at a single site, renders it unable to bind ribosomes and thus inactive. In turn, the rate of protein synthesis is reduced. The protein is Eukaryotic elongation factor 2 kinase of Rattus norvegicus (Rat).